A 302-amino-acid chain; its full sequence is Glycine--tRNA ligase alpha subunit (302 aa).

This sequence belongs to the class-II aminoacyl-tRNA synthetase family. As to quaternary structure, tetramer of two alpha and two beta subunits.

Its subcellular location is the cytoplasm. It carries out the reaction tRNA(Gly) + glycine + ATP = glycyl-tRNA(Gly) + AMP + diphosphate. The chain is Glycine--tRNA ligase alpha subunit from Haemophilus influenzae (strain PittGG).